The primary structure comprises 243 residues: Ribosomal RNA small subunit methyltransferase J (243 aa).

S-adenosyl-L-methionine contacts are provided by residues 112–113 (ER) and aspartate 164.

It belongs to the methyltransferase superfamily. RsmJ family.

The protein localises to the cytoplasm. The catalysed reaction is guanosine(1516) in 16S rRNA + S-adenosyl-L-methionine = N(2)-methylguanosine(1516) in 16S rRNA + S-adenosyl-L-homocysteine + H(+). Functionally, specifically methylates the guanosine in position 1516 of 16S rRNA. In Legionella pneumophila (strain Corby), this protein is Ribosomal RNA small subunit methyltransferase J.